Consider the following 144-residue polypeptide: UPF0179 protein PF1381 (144 aa).

The protein belongs to the UPF0179 family.

This Pyrococcus furiosus (strain ATCC 43587 / DSM 3638 / JCM 8422 / Vc1) protein is UPF0179 protein PF1381.